We begin with the raw amino-acid sequence, 2101 residues long: MDALESLLDEVALEGLDGLCLPALWSRLESRSPAFPLPLEPYTQEFLWRALATHPGISFYEEPRERPDLQLQDRYEEIDLETGILESRRDPVTLEDVYPIHMILENKDGIQGSCRYFKERKDITSSIRSKCLQPRCTMVEAFSRWGKKLIIVASQDMRYRALIGLEGDPDLKLPDFSYCILERLGRSRWQGELQRDLHTTAFKVDAGKLHYHRKILNKNGLITMQSHVIRLPTGAQQHSILLLLNRFHVDRRSKYDILMEKLSMMLSTRSNQIETLGKLREELGLCERTFKRLYQYMLNAGLAKVVSLPLQEIHPECGPCKTKKGTDVMVRCLKLLKEFKRKMEDDHDDDDDEEVISKGVPPVDIVFERDMLTQTYELIERRGTKGISQAEIRVAMNVGKLEARMLCRLLQRFKVVKGFMEDEGRQRTTKYISCVFAEESDLSRQYAREKARGELLTTVSLASVQDESLMPEGEEAFLSDSESEEESSCSGGKRRGRGSRGHARASGDAGSGSRPHHSTPAKGGWKVLNLHPLKKPKAAAEERSRRSSACRDGLDTSSSSELNAPFDPHSMDSHSGDIAVIEEVRLDNPKEGGGSQKGGRHGSSQDKPHKTYRLLKRRNLIIEAVTNLRLIESLFTIQKMIMDQEKQEGVSTKCCKKSIIRLVRNLSEEGLLRLYRTTVIQDGIKKKVDLVVHPSMDQNDPLVRSAIEQVRFRISNSSTANRVKVPPAPAPQEEAEEENQEPEVPSRSANSDPNTSSKPESTRVKKTDEKMGITPLKNYKPVIVPGLGRSIGFLPKMPRLKAMHLFLWYLVYGHPAGHTGEQPALHSERKTGKQESSRPGAQPSSGDDWDTSEAKNNTESSSWESEMELSTEIVYVDEISWMRYVPPIPIHRDFGFGWALVSDILLCLPLSIFVQLVQVSYKVDNLEDFLNDPLKKHTLIRFLPRHIRQQLLYKRRYIFSVVENLQRLCYMGLLQFGPTEKFQDKDQVFVFLKKNAVIVDTTICDPHYNLAHSSRPFERRLYVLDSMQDVECYWFDLQCICLNTPLGVVRCPCAQKICPDPGSDPEGSLRKEQESAMDKHNLERKCAMLEYTTGSREVVDEGLVPGDGLGAAGLDSSFYAHLKRNWVWTSYIINKARKNNTSENGLTGRLQTFLSKRPMPLGSGGSGRLPLWSEGRADAELCADKEEQFELDREPTPGRNRKVRGGKSQKRKRLKKEPIRKTKRRRRGEHPEAKSKKLRYQDEADQNALRMMTRLRVSWSMQEDGLLMLCRIASNVLNTKVKGPFVTWQVVRDILHATFEESLDKTSHSVGRRARYIVKNPQAFMNYKVCLAEVYQDKALVGDFMSRKGNYEDPKVCAKEFKEFVEKLKEKFSSGLRNPNLEIPNTLQELFAKYRVLAIGDEKDRVRKEDELNSVEDIHFLVLQNLIQSTLSLSNSQSNSCQSFQIFRLYREFREPVLVRAFMECQKRSLVNRRRVSHSQGPKKNRAVPFVPMSYQLSQSYYKLFTWRFPTTICTESFQFYDRLRTNGMLDQPDHFSFKDLDSSDPSNDLVAFSLDSPGGHCVTALALFSLGLLSVDVRIPEQIVVVDSSMVESEVMKSLGKDGGLDDDEEEEDLDEGSGTKRQGVEVKAHQASHTKYLLMRGYYTVPGMVSTRNLNPNDSIVVNSCQVKFRLRNTPASTQLGPTGFTATPLEELQAGLSCLPASFTSLVDPQLRTHCPEEFAHQMAQSGYSPEDVAASLEILQAVAAADCFGIDKEKLSRQFSALEKIADRRTRTFLDYIQDLLEQEQVMEVGGNTVRLVTMASAQPWLLHSMRLRDMEVDTKASGDDSQSRLPEGPSIEDHTSEGAAVPPVSSHSTKKRPHCPETDAEEATRLPAKKPTLQDVRVAASPRPGAEEQAEAQAPAQLAAPEDADAGGPRQENQENVGVSGLEQLGCEFQLPEGSEDPRGLTESNMAQAAWESGCERVCFVGRPWRGVDGHLNMPVCKGMLEAVLYHIMSRPGVPESCLLQYYQGVLQPVAVLELLRGLESLGCIQKRTLRKPASVSLFSRPVVEGLGQASEAEALSCHESTVTFYEPTLDCTIRLGRVFPHDINWNKWIHL.

Positions 473-487 (GEEAFLSDSESEEES) are enriched in acidic residues. Disordered stretches follow at residues 473-574 (GEEA…MDSH) and 588-609 (NPKEGGGSQKGGRHGSSQDKPH). Residues 492–503 (GKRRGRGSRGHA) show a composition bias toward basic residues. Over residues 504-513 (RASGDAGSGS) the composition is skewed to low complexity. Lysine 534 is covalently cross-linked (Glycyl lysine isopeptide (Lys-Gly) (interchain with G-Cter in SUMO2)). Residue serine 667 is modified to Phosphoserine. Disordered regions lie at residues 718-772 (STAN…EKMG) and 820-864 (GEQP…SSWE). Over residues 747–759 (RSANSDPNTSSKP) the composition is skewed to polar residues. Basic and acidic residues-rich tracts occupy residues 760 to 771 (ESTRVKKTDEKM) and 826 to 836 (HSERKTGKQES). Residues lysine 770 and lysine 833 each participate in a glycyl lysine isopeptide (Lys-Gly) (interchain with G-Cter in SUMO2) cross-link. Serine 1063 is subject to Phosphoserine. Positions 1186–1196 (EEQFELDREPT) are enriched in basic and acidic residues. 3 disordered regions span residues 1186-1239 (EEQF…KKLR), 1598-1627 (KSLGKDGGLDDDEEEEDLDEGSGTKRQGVE), and 1822-1923 (DTKA…QENQ). Threonine 1196 carries the post-translational modification Phosphothreonine. Residues 1199–1215 (RNRKVRGGKSQKRKRLK) show a composition bias toward basic residues. Over residues 1229–1239 (EHPEAKSKKLR) the composition is skewed to basic and acidic residues. The segment covering 1606-1617 (LDDDEEEEDLDE) has biased composition (acidic residues). Over residues 1822 to 1831 (DTKASGDDSQ) the composition is skewed to basic and acidic residues. Serine 1854 and serine 1890 each carry phosphoserine. Low complexity predominate over residues 1900 to 1910 (EAQAPAQLAAP).

It belongs to the TFIIIC subunit 1 family. Part of the TFIIIC subcomplex TFIIIC2, consisting of six subunits, GTF3C1, GTF3C2, GTF3C3, GTF3C4, GTF3C5 and GTF3C6. Interacts with IGHMBP2. Interacts with MAF1.

The protein localises to the nucleus. Required for RNA polymerase III-mediated transcription. Component of TFIIIC that initiates transcription complex assembly on tRNA and is required for transcription of 5S rRNA and other stable nuclear and cytoplasmic RNAs. Binds to the box B promoter element. This chain is General transcription factor 3C polypeptide 1 (Gtf3c1), found in Mus musculus (Mouse).